The sequence spans 70 residues: Small ribosomal subunit protein bS21A (70 aa).

Belongs to the bacterial ribosomal protein bS21 family.

The chain is Small ribosomal subunit protein bS21A from Burkholderia orbicola (strain AU 1054).